The primary structure comprises 378 residues: Chaperone protein DnaJ 2 (378 aa).

In terms of domain architecture, J spans 4–68 (DYYAVLGVRR…QKKQVYDLGG (65 aa)). A CR-type zinc finger spans residues 130–212 (GTTKDIQVDT…CAGDGRVRSR (83 aa)). 8 residues coordinate Zn(2+): Cys-143, Cys-146, Cys-160, Cys-163, Cys-186, Cys-189, Cys-200, and Cys-203. CXXCXGXG motif repeat units follow at residues 143–150 (CNTCNGEG), 160–167 (CDMCRGRG), 186–193 (CPQCQGFG), and 200–207 (CPECAGDG). Disordered regions lie at residues 297–319 (RPGT…LRGG) and 351–378 (RGEE…FNGR). A compositionally biased stretch (polar residues) spans 358 to 367 (GQFQPGQQGL).

Belongs to the DnaJ family. As to quaternary structure, homodimer. Requires Zn(2+) as cofactor.

The protein resides in the cytoplasm. Its function is as follows. Participates actively in the response to hyperosmotic and heat shock by preventing the aggregation of stress-denatured proteins and by disaggregating proteins, also in an autonomous, DnaK-independent fashion. Unfolded proteins bind initially to DnaJ; upon interaction with the DnaJ-bound protein, DnaK hydrolyzes its bound ATP, resulting in the formation of a stable complex. GrpE releases ADP from DnaK; ATP binding to DnaK triggers the release of the substrate protein, thus completing the reaction cycle. Several rounds of ATP-dependent interactions between DnaJ, DnaK and GrpE are required for fully efficient folding. Also involved, together with DnaK and GrpE, in the DNA replication of plasmids through activation of initiation proteins. This is Chaperone protein DnaJ 2 from Streptomyces coelicolor (strain ATCC BAA-471 / A3(2) / M145).